Consider the following 696-residue polypeptide: DNA ligase (696 aa).

NAD(+) is bound by residues 55 to 59 (DYEFD), 105 to 106 (SL), and Glu-137. Lys-139 (N6-AMP-lysine intermediate) is an active-site residue. NAD(+)-binding residues include Arg-160, Glu-194, Lys-310, and Lys-334. Zn(2+)-binding residues include Cys-428, Cys-431, Cys-446, and Cys-451. Positions 615–696 (NVNPNFVGKN…EFIELKDKFD (82 aa)) constitute a BRCT domain.

The protein belongs to the NAD-dependent DNA ligase family. LigA subfamily. Mg(2+) is required as a cofactor. The cofactor is Mn(2+).

It catalyses the reaction NAD(+) + (deoxyribonucleotide)n-3'-hydroxyl + 5'-phospho-(deoxyribonucleotide)m = (deoxyribonucleotide)n+m + AMP + beta-nicotinamide D-nucleotide.. DNA ligase that catalyzes the formation of phosphodiester linkages between 5'-phosphoryl and 3'-hydroxyl groups in double-stranded DNA using NAD as a coenzyme and as the energy source for the reaction. It is essential for DNA replication and repair of damaged DNA. The chain is DNA ligase from Fusobacterium nucleatum subsp. nucleatum (strain ATCC 25586 / DSM 15643 / BCRC 10681 / CIP 101130 / JCM 8532 / KCTC 2640 / LMG 13131 / VPI 4355).